The following is a 223-amino-acid chain: DNA mismatch repair protein MutH (223 aa).

This sequence belongs to the MutH family.

Its subcellular location is the cytoplasm. Functionally, sequence-specific endonuclease that cleaves unmethylated GATC sequences. It is involved in DNA mismatch repair. The chain is DNA mismatch repair protein MutH from Haemophilus influenzae (strain 86-028NP).